The chain runs to 298 residues: H-2 class I histocompatibility antigen, alpha chain (298 aa).

Topologically, residues 1–244 (RYEPRARWIE…EPPSSTKTNT (244 aa)) are extracellular. N43 is a glycosylation site (N-linked (GlcNAc...) asparagine). A disulfide bridge links C58 with C121. N-linked (GlcNAc...) asparagine glycosylation occurs at N133. One can recognise an Ig-like C1-type domain in the interval 142 to 230 (PKAHVTHHRR…EGLPEPLTLR (89 aa)). A disulfide bridge links C160 with C216. The chain crosses the membrane as a helical span at residues 245-265 (VIIAVPVVLGAVVILGAVMAF). Residues 266–298 (VMKRRRNTGGKGGDYALAPVSQSSDMSLPDCKV) are Cytoplasmic-facing. The tract at residues 277 to 298 (GGDYALAPVSQSSDMSLPDCKV) is disordered. 2 positions are modified to phosphoserine: S289 and S292.

Belongs to the MHC class I family. As to quaternary structure, heterodimer of an alpha chain and a beta chain (beta-2-microglobulin).

It is found in the membrane. Involved in the presentation of foreign antigens to the immune system. The chain is H-2 class I histocompatibility antigen, alpha chain (H2-D1) from Mus musculus (Mouse).